The following is a 524-amino-acid chain: Phytoene desaturase (neurosporene-forming) (524 aa).

12–45 (VVIGAGLGGLAAAMRLGAKGYKVTVVDRLDRPGG) lines the FAD pocket. The disordered stretch occupies residues 500 to 524 (PDAPKPETPAAAAPKARTPRAKAAQ). Over residues 507–524 (TPAAAAPKARTPRAKAAQ) the composition is skewed to low complexity.

It belongs to the carotenoid/retinoid oxidoreductase family. It depends on FAD as a cofactor.

The enzyme catalyses 15-cis-phytoene + 3 A = all-trans-neurosporene + 3 AH2. It participates in carotenoid biosynthesis. Is inhibited by diphenylamine (DPA). Is also slightly inhibited by NAD, NADP or ATP in the presence of FAD. In terms of biological role, converts phytoene into all-trans-neurosporene as the major product, via the intermediary of phytofluene and zeta-carotene, by the introduction of three double bonds. Both intermediates, phytofluene and zeta-carotene, can be used as substrates and converted to neurosporene. 1,2-epoxy phytoene is also a suitable substrate whereas the C30 diapophytoene is not. This Rhodobacter capsulatus (strain ATCC BAA-309 / NBRC 16581 / SB1003) protein is Phytoene desaturase (neurosporene-forming) (crtI).